Reading from the N-terminus, the 300-residue chain is CDP-diacylglycerol--serine O-phosphatidyltransferase (300 aa).

Helical transmembrane passes span 10–30, 74–94, 95–115, 135–155, 162–182, and 207–227; these read AVNLQILPSSMTVLSICAGLT, IDSLADAVNFGVAPAVVLYAT, MLSTTPVGWVAVLLYPVCVVL, EFFVGMPAPAGAVSVIGLLAL, GWWTSTWFLCIWVTGTSMLLI, and LAIFAAAVVLAPYLLIWVIIL.

Belongs to the CDP-alcohol phosphatidyltransferase class-I family.

It localises to the cell membrane. The catalysed reaction is a CDP-1,2-diacyl-sn-glycerol + L-serine = a 1,2-diacyl-sn-glycero-3-phospho-L-serine + CMP + H(+). The chain is CDP-diacylglycerol--serine O-phosphatidyltransferase (pssA) from Mycobacterium leprae (strain TN).